The sequence spans 167 residues: Peptidoglycan-binding-like protein (167 aa).

The first 24 residues, 1–24 (MRSPKVKFLTIFTLSILITKMSFA), serve as a signal peptide directing secretion.

Belongs to the IagB/IpgF/P19 family.

It is found in the periplasm. The polypeptide is Peptidoglycan-binding-like protein (pbl) (Escherichia coli O157:H7).